The chain runs to 135 residues: Sex-regulated protein janus-A (135 aa).

K37 is a substrate binding site. The active-site Proton acceptor is H63. 104–106 (SQG) contributes to the substrate binding site.

The protein belongs to the janus family.

JanA and janB regulate somatic sex differentiation. The sequence is that of Sex-regulated protein janus-A (janA) from Drosophila yakuba (Fruit fly).